The following is a 295-amino-acid chain: MAKVKVAILGSGNIGTDLMIKLERSSHLELTAMIGIDPESDGLKKAKTKGYYVFDGGLKQFLSEASELADLVFDATSAKAHVRHAKALREAGKMVIDLTPAAVGPYVVPSVNLGDYLEESNLNLITCGGQATIPIVHAINRVAQVHYSEIVATIASKSAGPGTRANIDEFTQTTAHGLEAIGGAKKGKAIIILNPAEPPIIMRNAVYALVECEQMDEVAIARSVQETVAYIQSYVPGYRLRTEPLFEGNKVTVFVEVEGAGDYLPTYSGNLDIMTATAIKVAEEWVQHRVKAASV.

11–14 is an NAD(+) binding site; that stretch reads SGNI. Catalysis depends on Cys-127, which acts as the Acyl-thioester intermediate. NAD(+) contacts are provided by residues 158–166 and Asn-270; that span reads SAGPGTRAN.

Belongs to the acetaldehyde dehydrogenase family.

It carries out the reaction acetaldehyde + NAD(+) + CoA = acetyl-CoA + NADH + H(+). This Geobacillus thermodenitrificans (strain NG80-2) protein is Acetaldehyde dehydrogenase (nbaJ).